Here is a 382-residue protein sequence, read N- to C-terminus: Histidinol-phosphate aminotransferase (382 aa).

The residue at position 215 (Lys-215) is an N6-(pyridoxal phosphate)lysine. The tract at residues 363–382 (NIDNQSKTHSQTSSIRKGTI) is disordered.

It belongs to the class-II pyridoxal-phosphate-dependent aminotransferase family. Histidinol-phosphate aminotransferase subfamily. In terms of assembly, homodimer. The cofactor is pyridoxal 5'-phosphate.

It catalyses the reaction L-histidinol phosphate + 2-oxoglutarate = 3-(imidazol-4-yl)-2-oxopropyl phosphate + L-glutamate. It participates in amino-acid biosynthesis; L-histidine biosynthesis; L-histidine from 5-phospho-alpha-D-ribose 1-diphosphate: step 7/9. The chain is Histidinol-phosphate aminotransferase from Yersinia pseudotuberculosis serotype O:3 (strain YPIII).